Reading from the N-terminus, the 243-residue chain is MNIVPLSQAPPEFLEVAWLADACKLLMGVGWTANYIGMIYKSIKDRTYGMALMPLCCNFAWELVYALILPFDSGMEKWVHVTGLAFNCGVMYTAIKFAPGEWAHARLVQRHLTWIFIASVAGWMSAHLALAAQLGPSLAQAWSAYGCQLLLSVGGLCQLLCRGHSRGTSYLLWFSRFFGSLVLIPQDILRYKYWRRDHEWMKSPLYLWFVSIFLILDGSYGILLWYVRRFERETAEAENRKRR.

The next 7 membrane-spanning stretches (helical) occupy residues 13–33 (FLEVAWLADACKLLMGVGWTA), 51–71 (ALMPLCCNFAWELVYALILPF), 78–98 (WVHVTGLAFNCGVMYTAIKFA), 112–132 (LTWIFIASVAGWMSAHLALAA), 141–161 (AWSAYGCQLLLSVGGLCQLLC), 169–189 (SYLLWFSRFFGSLVLIPQDIL), and 207–227 (LWFVSIFLILDGSYGILLWYV).

The protein belongs to the paxB family.

It localises to the membrane. Its pathway is secondary metabolite biosynthesis; terpenoid biosynthesis. Functionally, terpene cyclase; part of the gene cluster that mediates the biosynthesis of diterpenoid pyrones. The first step of the pathway is the synthesis of the alpha-pyrone moiety by the polyketide synthase dpmpA via condensation of one acetyl-CoA starter unit with 3 malonyl-CoA units and 2 methylations. The alpha-pyrone is then combined with geranylgeranyl pyrophosphate (GGPP) formed by the GGPP synthase dpmpD through the action of the prenyltransferase dpmpC to yield a linear alpha-pyrone diterpenoid. Subsequent steps in the diterpenoid pyrone biosynthetic pathway involve the decalin core formation, which is initiated by the epoxidation of the C10-C11 olefin by the FAD-dependent oxidoreductase dpmpE, and is followed by a cyclization cascade catalyzed by the terpene cyclase dpmpB. The short chain dehydrogenase/reductase dpmpG then oxidizes the 8S hydroxy group to a ketone and the short chain dehydrogenase/reductase dpmpH reduces the ketone to the 8R hydroxy group to yield higginsianin B. Higginsianin B is further methylated by the methyltransferase dpmpI to produce the intermediate named FDDP B. The cytochrome P450 monooxygenase dpmpJ then oxidizes the C-26 methyl to primary alcohol, producing the final diterpenoid pyrone with a C-26 primary alcohol on the gamma-pyrone moiety named FDDP C. This is Terpene cyclase dpmpB from Macrophomina phaseolina (strain MS6) (Charcoal rot fungus).